Reading from the N-terminus, the 141-residue chain is Putative phosphatidylglycerol/phosphatidylinositol transfer protein DDB_G0278295 (141 aa).

Positions M1–T19 are cleaved as a signal peptide. N-linked (GlcNAc...) asparagine glycosylation is found at N82 and N104.

Belongs to the NPC2 family. Monomer.

Catalyzes the intermembrane transfer of phosphatidylglycerol and phosphatidylinositol. The protein is Putative phosphatidylglycerol/phosphatidylinositol transfer protein DDB_G0278295 of Dictyostelium discoideum (Social amoeba).